The primary structure comprises 110 residues: UPF0339 protein SO_3888 (110 aa).

Repeat copies occupy residues 10–58 and 61–109.

It belongs to the UPF0339 family. Duplicated subfamily.

In Shewanella oneidensis (strain ATCC 700550 / JCM 31522 / CIP 106686 / LMG 19005 / NCIMB 14063 / MR-1), this protein is UPF0339 protein SO_3888.